The chain runs to 327 residues: Cobalamin biosynthesis protein CobD (327 aa).

The next 4 membrane-spanning stretches (helical) occupy residues 61 to 78 (MWLT…GLVI), 80 to 102 (SILP…ILLA), 160 to 182 (GIVA…YKLI), and 300 to 322 (AALV…ASLV).

The protein belongs to the CobD/CbiB family.

It is found in the cell membrane. It participates in cofactor biosynthesis; adenosylcobalamin biosynthesis. Converts cobyric acid to cobinamide by the addition of aminopropanol on the F carboxylic group. The chain is Cobalamin biosynthesis protein CobD from Brucella suis biovar 1 (strain 1330).